Consider the following 412-residue polypeptide: Esterase EstD (412 aa).

The first 20 residues, 1–20 (MRLTVFLSLFLGVMVFGAFD), serve as a signal peptide directing secretion. Serine 243 (nucleophile) is an active-site residue. Catalysis depends on charge relay system residues aspartate 347 and histidine 378.

It belongs to the AB hydrolase superfamily. Esterase 10 family. Exists mainly as a monomer and, to some extent as a dimer.

It carries out the reaction a carboxylic ester + H2O = an alcohol + a carboxylate + H(+). With respect to regulation, is strongly inhibited by phenylmethylsulfonyl fluoride, a serine protease inhibitor, and by mercury chloride. Diethyl pyrocarbonate, a histidine modifier, also inhibits the reaction, albeit less pronounced than phenylmethylsulfonyl fluoride. EDTA and dithiothreitol have no effect on enzyme activity. Functionally, exhibits significant esterase activity with a preference for short acyl chain esters (C4-C8) in vitro. Its physiological function is not known. Displays neither proteolytic activity using casein as substrate, nor peptidase activity when assayed with L-leucine p-nitroanilide and L-proline p-nitroanilide. This Thermotoga maritima (strain ATCC 43589 / DSM 3109 / JCM 10099 / NBRC 100826 / MSB8) protein is Esterase EstD.